Reading from the N-terminus, the 357-residue chain is Protein-arginine kinase (357 aa).

Residues 24 to 255 enclose the Phosphagen kinase C-terminal domain; sequence IVISTRLRIA…RQIIEQERVA (232 aa). ATP contacts are provided by residues 27-31, His-92, Arg-126, 177-181, and 208-213; these read STRLR, RASVM, and RGIYGE. The short motif at 338 to 343 is the RDXXRA motif of the pArg binding pocket involved in allosteric regulation element; it reads RDERRA.

Belongs to the ATP:guanido phosphotransferase family.

The enzyme catalyses L-arginyl-[protein] + ATP = N(omega)-phospho-L-arginyl-[protein] + ADP + H(+). With respect to regulation, appears to be allosterically activated by the binding of pArg-containing polypeptides to the pArg-binding pocket localized in the C-terminal domain of McsB. In terms of biological role, catalyzes the specific phosphorylation of arginine residues in proteins. In Brevibacillus brevis (strain 47 / JCM 6285 / NBRC 100599), this protein is Protein-arginine kinase.